Here is a 385-residue protein sequence, read N- to C-terminus: 3-hydroxyisobutyryl-CoA hydrolase, mitochondrial (385 aa).

Residues glutamate 120, glycine 145, glutamate 168, and aspartate 176 each contribute to the substrate site.

The protein belongs to the enoyl-CoA hydratase/isomerase family.

The protein localises to the mitochondrion. It catalyses the reaction 3-hydroxy-2-methylpropanoyl-CoA + H2O = 3-hydroxy-2-methylpropanoate + CoA + H(+). Its pathway is amino-acid degradation; L-valine degradation. Its function is as follows. Hydrolyzes 3-hydroxyisobutyryl-CoA (HIBYL-CoA), a saline catabolite. Has high activity toward isobutyryl-CoA. Could be an isobutyryl-CoA dehydrogenase that functions in valine catabolism. Also hydrolyzes 3-hydroxypropanoyl-CoA. In Xenopus tropicalis (Western clawed frog), this protein is 3-hydroxyisobutyryl-CoA hydrolase, mitochondrial (hibch).